A 339-amino-acid polypeptide reads, in one-letter code: Glutamyl-tRNA reductase (339 aa).

Substrate-binding positions include 50–53 (TCHR), S102, 107–109 (ETE), and Q113. Catalysis depends on C51, which acts as the Nucleophile. 181–186 (GYSDIN) is an NADP(+) binding site.

It belongs to the glutamyl-tRNA reductase family. Homodimer.

The enzyme catalyses (S)-4-amino-5-oxopentanoate + tRNA(Glu) + NADP(+) = L-glutamyl-tRNA(Glu) + NADPH + H(+). It functions in the pathway porphyrin-containing compound metabolism; protoporphyrin-IX biosynthesis; 5-aminolevulinate from L-glutamyl-tRNA(Glu): step 1/2. Functionally, catalyzes the NADPH-dependent reduction of glutamyl-tRNA(Glu) to glutamate 1-semialdehyde (GSA). This Chlamydia pneumoniae (Chlamydophila pneumoniae) protein is Glutamyl-tRNA reductase.